The sequence spans 174 residues: uncharacterized protein (174 aa).

This is an uncharacterized protein from Archaeoglobus fulgidus (strain ATCC 49558 / DSM 4304 / JCM 9628 / NBRC 100126 / VC-16).